Here is an 883-residue protein sequence, read N- to C-terminus: DNA topoisomerase 1 (883 aa).

In terms of domain architecture, Toprim spans 2-126 (PKLVIVESPT…TKRMVFHEIT (125 aa)). Residues E8 and D95 each coordinate Mg(2+). In terms of domain architecture, Topo IA-type catalytic spans 141-583 (DQRLVHAQET…QFYRGDRGLE (443 aa)). Positions 175-180 (SAGRVQ) are interaction with DNA. A disordered region spans residues 271 to 294 (SLEEKPTTRKPAPPFTTSTLQQES). Y320 (O-(5'-phospho-DNA)-tyrosine intermediate) is an active-site residue. The interval 842–883 (AKAGQAKAKGGRRSTGTPKSGETKARTTKTTKKTTTRRTTSR) is disordered. Positions 867-883 (RTTKTTKKTTTRRTTSR) are enriched in basic residues.

It belongs to the type IA topoisomerase family. In terms of assembly, monomer. Mg(2+) serves as cofactor.

The catalysed reaction is ATP-independent breakage of single-stranded DNA, followed by passage and rejoining.. In terms of biological role, releases the supercoiling and torsional tension of DNA, which is introduced during the DNA replication and transcription, by transiently cleaving and rejoining one strand of the DNA duplex. Introduces a single-strand break via transesterification at a target site in duplex DNA. The scissile phosphodiester is attacked by the catalytic tyrosine of the enzyme, resulting in the formation of a DNA-(5'-phosphotyrosyl)-enzyme intermediate and the expulsion of a 3'-OH DNA strand. The free DNA strand then undergoes passage around the unbroken strand, thus removing DNA supercoils. Finally, in the religation step, the DNA 3'-OH attacks the covalent intermediate to expel the active-site tyrosine and restore the DNA phosphodiester backbone. The chain is DNA topoisomerase 1 from Synechococcus elongatus (strain ATCC 33912 / PCC 7942 / FACHB-805) (Anacystis nidulans R2).